The sequence spans 357 residues: Ribosomal RNA large subunit methyltransferase M (357 aa).

Residues serine 183, alanine 216 to glycine 219, aspartate 235, aspartate 255, and aspartate 271 contribute to the S-adenosyl-L-methionine site. Lysine 300 acts as the Proton acceptor in catalysis.

This sequence belongs to the class I-like SAM-binding methyltransferase superfamily. RNA methyltransferase RlmE family. RlmM subfamily. As to quaternary structure, monomer.

The protein localises to the cytoplasm. It carries out the reaction cytidine(2498) in 23S rRNA + S-adenosyl-L-methionine = 2'-O-methylcytidine(2498) in 23S rRNA + S-adenosyl-L-homocysteine + H(+). Functionally, catalyzes the 2'-O-methylation at nucleotide C2498 in 23S rRNA. The polypeptide is Ribosomal RNA large subunit methyltransferase M (Pseudomonas syringae pv. tomato (strain ATCC BAA-871 / DC3000)).